The chain runs to 338 residues: MQIDHSGDSSEASQAHDSKLHHSHLLGNIPLGLPEARRRVKILVSVDFDAVSGWMGTGQHSRNCLSDYSAGIFAGRVGVGRLLKILDRVGIAEKVTWFIPGHSMETFPLETKAIVDSGAEIALHGYCHEDCTQLDPQQQQDILDKCITLAESLTGKRPVGFRAPLYRIDHDTISLLERKGFLYDTSLSGHDAQLYYLDSGFPLDVVDYSKSASTWMKPSPQPRQLSVVEIPANWYMEDMTPMQFLPNVTNSHGFVSSEAIEKMWKDRFNWLWNWGPDGSGPGDFVFPLVLHPDTSGMAHVAGTIEGMLRWLKEWGPQVEFVTYEEAAREFLLDKEVPA.

The Zn(2+) site is built by D49, H124, and H128. Residues 65-257 (LSDYSAGIFA…VTNSHGFVSS (193 aa)) form the NodB homology domain.

Belongs to the polysaccharide deacetylase family.

Peptidoglycan deacetylase-like protein; part of the Fg3_54/C64 gene cluster that mediates the biosynthesis of the octapeptide fusaoctaxin A, a virulence factor that is required for cell-to-cell invasiveness of plant host. The 2 nonribosomal peptide synthetases NRPS9 and NRPS5 form an assembly line which likely utilizes GABA as a starter unit (loaded on the unique module M1 of NRPS9) and sequentially incorporates seven extender units composed of the residues L-Ala, L-allo-Ile, L-Ser, L-Val, L-Ser, L-Leu and L-Leu, respectively. During the process, each of the residues that are tethered on modules M3-M7 of NRPS5 containing an E domain can undergo an epimerization reaction to produce a D-configuration before the transpeptidation reaction occurs. The elongation of the peptidyl chain might be terminated by module M8-mediated L-Leu incorporation, followed by R domain-catalyzed 4 electron reduction to release the resulting octapeptide from the assembly line as an alcohol. Fusaoctaxin A is cleaved by the cluster specific ABC transporter FGM5 to the pentapeptide fusapentaxin A and the tripeptide fusatrixin A. The other enzymes from the cluster, FGM1, FGM2, FGM3 and FGM9 seem not to be involved in the biosynthesis of fusaoctaxin A and their functions have still to be determined. The sequence is that of Peptidoglycan deacetylase-like protein FGM2 from Gibberella zeae (strain ATCC MYA-4620 / CBS 123657 / FGSC 9075 / NRRL 31084 / PH-1) (Wheat head blight fungus).